The sequence spans 528 residues: GMP synthase [glutamine-hydrolyzing] (528 aa).

Residues Ala13–Asp204 enclose the Glutamine amidotransferase type-1 domain. Cys90 acts as the Nucleophile in catalysis. Catalysis depends on residues His178 and Glu180. Residues Trp205–Arg403 enclose the GMPS ATP-PPase domain. ATP is bound at residue Ser232–Ser238.

In terms of assembly, homodimer.

It carries out the reaction XMP + L-glutamine + ATP + H2O = GMP + L-glutamate + AMP + diphosphate + 2 H(+). It participates in purine metabolism; GMP biosynthesis; GMP from XMP (L-Gln route): step 1/1. In terms of biological role, catalyzes the synthesis of GMP from XMP. The sequence is that of GMP synthase [glutamine-hydrolyzing] from Synechococcus sp. (strain CC9902).